A 145-amino-acid polypeptide reads, in one-letter code: Superoxide dismutase [Mn/Fe] (145 aa).

2 residues coordinate Fe(3+): His-10 and His-64. The Mn(2+) site is built by His-10 and His-64.

The protein belongs to the iron/manganese superoxide dismutase family. It depends on Mn(2+) as a cofactor. Fe(3+) is required as a cofactor.

It carries out the reaction 2 superoxide + 2 H(+) = H2O2 + O2. Functionally, destroys superoxide anion radicals which are normally produced within the cells and which are toxic to biological systems. Catalyzes the dismutation of superoxide anion radicals into O2 and H2O2 by successive reduction and oxidation of the transition metal ion at the active site. The sequence is that of Superoxide dismutase [Mn/Fe] (sodA) from Streptococcus acidominimus.